We begin with the raw amino-acid sequence, 414 residues long: MQAEAIFTGTEMLLGQIVNTNAAFLGRELAAAGISLYRQVVVGDNLVRIREAIDNARRRADLIIVSGGLGPTEDDLSREALAAALGLPLVEDPAARENVTRYFAARRRPMTPNNLKQALLPAGARAMDNPHGTAAGVFLEHEGKVYALLPGPPREFEPMLVNQLLPRLEPYGARREIIFSRVLKIAGIGESGVEEAVKDLLHSDNPTLAPLAKPGEVTLRLTARAKSQEAARSLTALLEITIRERLGDYIFGTDDDTLESVTGAILAARHLTLAVAESCTGGLLAHRVTNIPGSSDYFLGGMVTYSNEAKVKFLGVEPEVLAARGAVSPEVAAAMARGVRQAVGTDIGIGITGIAGPGGGSEEKPVGLVYLGIDFRGQVEVRRELFMGQRENIKWQSTQSALYLLWRSLRAQCE.

The protein belongs to the CinA family.

This is Putative competence-damage inducible protein from Moorella thermoacetica (strain ATCC 39073 / JCM 9320).